We begin with the raw amino-acid sequence, 65 residues long: Small ribosomal subunit protein bS21 (65 aa).

The protein belongs to the bacterial ribosomal protein bS21 family.

The chain is Small ribosomal subunit protein bS21 from Thermodesulfovibrio yellowstonii (strain ATCC 51303 / DSM 11347 / YP87).